The sequence spans 223 residues: Adenylate kinase (223 aa).

Residue 10 to 15 coordinates ATP; the sequence is GSGKGT. The NMP stretch occupies residues 30-59; the sequence is ESGAIFREHIGGGTELGKKAKAYIDRGDLV. Residues S31, R36, 57–59, 84–87, and Q91 contribute to the AMP site; these read DLV and GFPR. An LID region spans residues 125-164; it reads GRRLCKNNNNHPNNIFIEAIKPNGDVCRVCGGTLSSRSDD. R126 contributes to the ATP binding site. Positions 161 and 173 each coordinate AMP. An ATP-binding site is contributed by G209.

This sequence belongs to the adenylate kinase family. Monomer.

The protein localises to the cytoplasm. It carries out the reaction AMP + ATP = 2 ADP. Its pathway is purine metabolism; AMP biosynthesis via salvage pathway; AMP from ADP: step 1/1. Functionally, catalyzes the reversible transfer of the terminal phosphate group between ATP and AMP. Plays an important role in cellular energy homeostasis and in adenine nucleotide metabolism. The protein is Adenylate kinase of Desulfovibrio desulfuricans (strain ATCC 27774 / DSM 6949 / MB).